Reading from the N-terminus, the 422-residue chain is Putative FBD-associated F-box protein At1g55030 (422 aa).

In terms of domain architecture, F-box spans 8–60 (TDMISQLPEPLILQILGSLPTKVAITTSVLSKQWQSHWKMMPKLEFDSFLRRL). 3 LRR repeats span residues 132-153 (TLET…VYLK), 154-175 (SLKT…INLL), and 180-201 (NLQD…TIAV). The region spanning 342 to 391 (EWNQPKNVPECLHHLEKFIWEGYKWKREEIEVAKYILKNTNRLKRAIFSL) is the FBD domain.

This chain is Putative FBD-associated F-box protein At1g55030, found in Arabidopsis thaliana (Mouse-ear cress).